A 70-amino-acid polypeptide reads, in one-letter code: Protein SlyX homolog (70 aa).

This sequence belongs to the SlyX family.

This is Protein SlyX homolog from Rhizobium meliloti (strain 1021) (Ensifer meliloti).